Reading from the N-terminus, the 205-residue chain is Holliday junction branch migration complex subunit RuvA (205 aa).

Residues 1–64 (MIGRIRGLLI…EDAQLLYGFI (64 aa)) form a domain I region. The interval 65–143 (SKQERSLFRL…SLMEASVGSE (79 aa)) is domain II. A flexible linker region spans residues 144 to 156 (REFMLQSNYTAPE). Residues 157–205 (AVNTAEEDAIAALLSLGYKPAQASKAVSSVYTDGMSSETLIKSALKSML) form a domain III region.

Belongs to the RuvA family. Homotetramer. Forms an RuvA(8)-RuvB(12)-Holliday junction (HJ) complex. HJ DNA is sandwiched between 2 RuvA tetramers; dsDNA enters through RuvA and exits via RuvB. An RuvB hexamer assembles on each DNA strand where it exits the tetramer. Each RuvB hexamer is contacted by two RuvA subunits (via domain III) on 2 adjacent RuvB subunits; this complex drives branch migration. In the full resolvosome a probable DNA-RuvA(4)-RuvB(12)-RuvC(2) complex forms which resolves the HJ.

The protein resides in the cytoplasm. Its function is as follows. The RuvA-RuvB-RuvC complex processes Holliday junction (HJ) DNA during genetic recombination and DNA repair, while the RuvA-RuvB complex plays an important role in the rescue of blocked DNA replication forks via replication fork reversal (RFR). RuvA specifically binds to HJ cruciform DNA, conferring on it an open structure. The RuvB hexamer acts as an ATP-dependent pump, pulling dsDNA into and through the RuvAB complex. HJ branch migration allows RuvC to scan DNA until it finds its consensus sequence, where it cleaves and resolves the cruciform DNA. This chain is Holliday junction branch migration complex subunit RuvA, found in Shewanella halifaxensis (strain HAW-EB4).